The sequence spans 547 residues: Puff-specific protein Bx42 (547 aa).

The interval 177–343 (AQYIRYTPSQ…AREERAGLRN (167 aa)) is SNW. A phosphoserine mark is found at serine 227 and serine 235. 2 disordered regions span residues 333-398 (RARE…ERDI) and 486-547 (QFSG…SKRD). 2 stretches are compositionally biased toward basic and acidic residues: residues 358–398 (EVRE…ERDI) and 526–539 (KRAE…SSHS).

This sequence belongs to the SNW family.

The protein localises to the nucleus. Functionally, may play a role in chromatin structure and function. The sequence is that of Puff-specific protein Bx42 (Bx42) from Drosophila melanogaster (Fruit fly).